The primary structure comprises 637 residues: Sodium-dependent phosphate transport protein 2A (637 aa).

Over 1–103 the chain is Cytoplasmic; it reads MMSYSERLGG…LAQVGTKLLK (103 aa). A phosphoserine mark is found at Ser-14 and Ser-34. Residues 104 to 125 form a helical membrane-spanning segment; sequence VPLMLGFLYLFVCSLDVLSSAF. Residues 126–145 lie on the Extracellular side of the membrane; it reads QLAGGKVAGDIFKDNAILSN. A helical transmembrane segment spans residues 146–163; that stretch reads PVAGLVVGILVTVLVQSS. Topologically, residues 164–216 are cytoplasmic; sequence STSTSIIVSMVSSGLLEVSSAIPIIMGSNIGTSVTNTIVALMQAGDRTDFRRA. A helical transmembrane segment spans residues 217–236; it reads FAGATVHDCFNWLSVLVLLP. 2 cysteine pairs are disulfide-bonded: Cys-225–Cys-520 and Cys-306–Cys-334. Residues 237–345 lie on the Extracellular side of the membrane; the sequence is LEAATGYLHH…HIFVDTGLPD (109 aa). Residues Asn-298 and Asn-328 are each glycosylated (N-linked (GlcNAc...) asparagine). Residues 346 to 368 traverse the membrane as a helical segment; sequence LAVGLILLAGSLVVLCTCLILLV. The Cytoplasmic portion of the chain corresponds to 369–410; that stretch reads KMLNSLLKGQVANVIQKVINTDFPAPFTWVTGYFAMVVGASM. A helical membrane pass occupies residues 411–434; sequence TFVVQSSSVFTSAITPLIGLGVIS. Residues 435–464 are Extracellular-facing; that stretch reads IERAYPLTLGSNIGTTTTAILAALASPREK. Residues 465–485 traverse the membrane as a helical segment; the sequence is LSSSFQIALCHFFFNISGILL. Over 486 to 511 the chain is Cytoplasmic; it reads WYPLPCTRLPIRMAKALGKRTAKYRW. The residue at position 506 (Thr-506) is a Phosphothreonine; by PKC. Residues 512–532 form a helical membrane-spanning segment; that stretch reads FAVLYLLVCFLLLPSLVFGIS. The Extracellular portion of the chain corresponds to 533–537; that stretch reads MAGWQ. The chain crosses the membrane as a helical span at residues 538–559; sequence AMVGVGTPFGALLAFVVLVNVL. The Cytoplasmic segment spans residues 560-637; the sequence is QSRSPGHLPK…LPAHHNATRL (78 aa). A Phosphoserine modification is found at Ser-605. Residue Thr-621 is modified to Phosphothreonine. At Ser-623 the chain carries Phosphoserine.

This sequence belongs to the SLC34A transporter family. In terms of assembly, interacts via its C-terminal region with NHERF4. Interacts with NHERF1. Interacts with TMEM174; regulates SLC34A1 internalization by PTH and FGF23. Kidney.

It localises to the apical cell membrane. The protein resides in the cell membrane. The enzyme catalyses 3 Na(+)(out) + phosphate(out) = 3 Na(+)(in) + phosphate(in). Its activity is regulated as follows. Transport activity is significantly increased in response to dietary phosphate deprivation. Functionally, involved in actively transporting phosphate into cells via Na(+) cotransport in the renal brush border membrane. The cotransport has a Na(+):Pi stoichiometry of 3:1 and is electrogenic. The sequence is that of Sodium-dependent phosphate transport protein 2A from Rattus norvegicus (Rat).